Reading from the N-terminus, the 545-residue chain is Glucans biosynthesis protein G (545 aa).

Residues 1–34 form the signal peptide; that stretch reads MVSLLRCQSFKPSSSLICSLALSAAFALSSSAFA. Positions 38–60 are disordered; sequence KPAENKPATPVVSPPKATAQPAN.

This sequence belongs to the OpgD/OpgG family.

It localises to the periplasm. It functions in the pathway glycan metabolism; osmoregulated periplasmic glucan (OPG) biosynthesis. Involved in the biosynthesis of osmoregulated periplasmic glucans (OPGs). This Shewanella sp. (strain ANA-3) protein is Glucans biosynthesis protein G.